The sequence spans 93 residues: Large ribosomal subunit protein uL23cz/uL23cy (93 aa).

This sequence belongs to the universal ribosomal protein uL23 family. Part of the 50S ribosomal subunit.

It is found in the plastid. The protein localises to the chloroplast. Functionally, binds to 23S rRNA. The polypeptide is Large ribosomal subunit protein uL23cz/uL23cy (rpl23-A) (Oryza nivara (Indian wild rice)).